The sequence spans 257 residues: Protein YIPF5 (257 aa).

Residues 1–124 (MSGFDNLNSG…RASDGSIMNE (124 aa)) are Cytoplasmic-facing. Positions 75–106 (PPTPQTFYGDSFEEEPPLLEELGINFDHIWQK) are interaction with Sec23. The chain crosses the membrane as a helical span at residues 125–145 (TDLAGPVVFCLAFGATLLLAG). Position 146 (K146) is a topological domain, lumenal. A helical membrane pass occupies residues 147 to 167 (IQFGYVYGISAIGCLGMFCLL). Over 168–173 (NLMSMT) the chain is Cytoplasmic. A helical transmembrane segment spans residues 174–194 (GVSFGCVASVLGYCLLPMILL). At 195–196 (SS) the chain is on the lumenal side. The helical transmembrane segment at 197–217 (FAVVFSLQGMVGILLTATIIG) threads the bilayer. The Cytoplasmic segment spans residues 218–236 (WCSFSASKIFISALAMDGQ). The chain crosses the membrane as a helical span at residues 237 to 257 (QLLVAYPCALLYGVFALISVF).

It belongs to the YIP1 family. Interacts with the COPII coat components Sec23 (SEC23A and/or SEC23B) and Sec24 (SEC24A and/or SEC24B). Interacts with YIF1A. May interact with RAB1A. Interacts with YIPF3 and YIPF4.

Its subcellular location is the endoplasmic reticulum membrane. The protein resides in the golgi apparatus. It is found in the cis-Golgi network membrane. The protein localises to the cytoplasmic vesicle. It localises to the COPII-coated vesicle. Plays a role in transport between endoplasmic reticulum and Golgi. In pancreatic beta cells, required to transport proinsulin from endoplasmic reticulum into the Golgi. This chain is Protein YIPF5, found in Rattus norvegicus (Rat).